A 188-amino-acid polypeptide reads, in one-letter code: dCTP deaminase (188 aa).

109 to 114 (KSTYAR) serves as a coordination point for dCTP. The active-site Proton donor/acceptor is the Glu135. Residues Gln154, Tyr168, and Gln178 each contribute to the dCTP site.

It belongs to the dCTP deaminase family. In terms of assembly, homotrimer.

It catalyses the reaction dCTP + H2O + H(+) = dUTP + NH4(+). It functions in the pathway pyrimidine metabolism; dUMP biosynthesis; dUMP from dCTP (dUTP route): step 1/2. Its function is as follows. Catalyzes the deamination of dCTP to dUTP. This chain is dCTP deaminase, found in Helicobacter pylori (strain J99 / ATCC 700824) (Campylobacter pylori J99).